The chain runs to 81 residues: RNA-binding protein Hfq (81 aa).

One can recognise a Sm domain in the interval 11–71; it reads DIFLNSARKN…VSTITPLRPI (61 aa).

It belongs to the Hfq family. Homohexamer.

Its function is as follows. RNA chaperone that binds small regulatory RNA (sRNAs) and mRNAs to facilitate mRNA translational regulation in response to envelope stress, environmental stress and changes in metabolite concentrations. Also binds with high specificity to tRNAs. The chain is RNA-binding protein Hfq from Clostridium acetobutylicum (strain ATCC 824 / DSM 792 / JCM 1419 / IAM 19013 / LMG 5710 / NBRC 13948 / NRRL B-527 / VKM B-1787 / 2291 / W).